The following is an 818-amino-acid chain: Protein Cep78 homolog (818 aa).

Disordered regions lie at residues 513–589 (LDVE…HEFA), 691–748 (RQAN…TEAT), and 768–798 (KQSE…DQNV). Residues 514–539 (DVEEEEEEEEEEQQAEESQSESEPQN) are compositionally biased toward acidic residues. Residues 561–589 (VRSEIKYVENNPKEAAKKNRESKSDHEFA) are compositionally biased toward basic and acidic residues. The span at 782 to 792 (GDAGGGGGSGD) shows a compositional bias: gly residues.

Belongs to the CEP78 family.

The protein resides in the cytoplasm. It is found in the cytoskeleton. The protein localises to the microtubule organizing center. Its subcellular location is the centrosome. It localises to the centriole. The protein resides in the cilium basal body. In terms of biological role, may play a role in cilium biogenesis. The protein is Protein Cep78 homolog of Drosophila melanogaster (Fruit fly).